Consider the following 310-residue polypeptide: Lymphotoxin-beta (310 aa).

The Cytoplasmic portion of the chain corresponds to 1–27 (MGALGLQGRGGRPQGTGCLLLAVAGAT). The helical; Signal-anchor for type II membrane protein transmembrane segment at 28–48 (SLVTLLLAVPITVLAVLALVP) threads the bilayer. Over 49-310 (QEQGGLVMES…LGKCLHSANV (262 aa)) the chain is Extracellular. Residues 67 to 86 (QGLSKSNGLPSRLHSQIPSS) form a disordered region. A THD domain is found at 138–293 (PAAHLIGAWM…GKTFFGAVMV (156 aa)). Residue Asn272 is glycosylated (N-linked (GlcNAc...) asparagine).

Belongs to the tumor necrosis factor family. In terms of assembly, heterotrimer of either two LTB and one LTA subunits or (less prevalent) two LTA and one LTB subunits.

The protein localises to the membrane. Functionally, cytokine that binds to LTBR/TNFRSF3. May play a specific role in immune response regulation. Provides the membrane anchor for the attachment of the heterotrimeric complex to the cell surface. The polypeptide is Lymphotoxin-beta (LTB) (Marmota monax (Woodchuck)).